We begin with the raw amino-acid sequence, 330 residues long: G-protein coupled bile acid receptor 1 (330 aa).

The Extracellular portion of the chain corresponds to M1–G19. An N-linked (GlcNAc...) asparagine glycan is attached at N4. Residues L20 to A40 form a helical membrane-spanning segment. Residues W41–A50 lie on the Cytoplasmic side of the membrane. Residues G51–L71 form a helical membrane-spanning segment. At P72–C85 the chain is on the extracellular side. N-linked (GlcNAc...) asparagine glycosylation is present at N76. C85 and C155 are joined by a disulfide. Residues L86–V106 form a helical membrane-spanning segment. Residues H107 to R125 are Cytoplasmic-facing. A helical transmembrane segment spans residues L126–W146. Residues N147–Y165 are Extracellular-facing. Residues L166 to V186 traverse the membrane as a helical segment. Over R187–G228 the chain is Cytoplasmic. The helical transmembrane segment at A229–L249 threads the bilayer. Residues A250–T261 are Extracellular-facing. The helical transmembrane segment at L262 to L282 threads the bilayer. Topologically, residues G283–N330 are cytoplasmic. The disordered stretch occupies residues D309–N330. The segment covering P319–N330 has biased composition (polar residues).

Belongs to the G-protein coupled receptor 1 family. In terms of tissue distribution, ubiquitously expressed. Expressed at higher level in spleen and placenta. Expressed at lower level in other tissues. In digestive tissues, it is expressed in stomach, duodenum, ileocecum, ileum, jejunum, ascending colon, transverse colon, descending colon, cecum and liver, but not in esophagus and rectum.

Its subcellular location is the cell membrane. Receptor for bile acid. Bile acid-binding induces its internalization, activation of extracellular signal-regulated kinase and intracellular cAMP production. May be involved in the suppression of macrophage functions by bile acids. The polypeptide is G-protein coupled bile acid receptor 1 (GPBAR1) (Homo sapiens (Human)).